Reading from the N-terminus, the 623-residue chain is tRNA uridine 5-carboxymethylaminomethyl modification enzyme MnmG (623 aa).

An FAD-binding site is contributed by 12–17 (GAGHAG). 272 to 286 (GPRYCPSIEDKINRF) contacts NAD(+).

It belongs to the MnmG family. In terms of assembly, homodimer. Heterotetramer of two MnmE and two MnmG subunits. FAD is required as a cofactor.

It localises to the cytoplasm. NAD-binding protein involved in the addition of a carboxymethylaminomethyl (cmnm) group at the wobble position (U34) of certain tRNAs, forming tRNA-cmnm(5)s(2)U34. In Christiangramia forsetii (strain DSM 17595 / CGMCC 1.15422 / KT0803) (Gramella forsetii), this protein is tRNA uridine 5-carboxymethylaminomethyl modification enzyme MnmG.